Here is a 118-residue protein sequence, read N- to C-terminus: Sporulation protein YjcA (118 aa).

3 consecutive transmembrane segments (helical) span residues 8 to 28 (IVLL…DTIM), 62 to 82 (FIGE…GFLI), and 92 to 112 (AQWL…ETLV).

This sequence belongs to the UPF0713 family.

The protein resides in the cell membrane. Functionally, involved in sporulation. The sequence is that of Sporulation protein YjcA (yjcA) from Bacillus subtilis (strain 168).